The primary structure comprises 225 residues: UPF0758 protein MADE_1000235 (225 aa).

The MPN domain maps to 102–224 (VFNNVDDTKR…TISFAQRGLL (123 aa)). Zn(2+) contacts are provided by His173, His175, and Asp186. A JAMM motif motif is present at residues 173-186 (HNHPSGVAEPSHAD).

It belongs to the UPF0758 family.

This is UPF0758 protein MADE_1000235 from Alteromonas mediterranea (strain DSM 17117 / CIP 110805 / LMG 28347 / Deep ecotype).